A 249-amino-acid chain; its full sequence is Ribonuclease 3 (249 aa).

Residues 21 to 149 enclose the RNase III domain; sequence VDHQPLIDAL…LLGAIYLAHG (129 aa). Residue glutamate 62 coordinates Mg(2+). Residue aspartate 66 is part of the active site. Mg(2+)-binding residues include aspartate 135 and glutamate 138. Residue glutamate 138 is part of the active site. Residues 176–244 enclose the DRBM domain; sequence DWKTTLQERL…AHKAVGFLQD (69 aa).

It belongs to the ribonuclease III family. As to quaternary structure, homodimer. The cofactor is Mg(2+).

It localises to the cytoplasm. It catalyses the reaction Endonucleolytic cleavage to 5'-phosphomonoester.. In terms of biological role, digests double-stranded RNA. Involved in the processing of primary rRNA transcript to yield the immediate precursors to the large and small rRNAs (23S and 16S). Processes some mRNAs, and tRNAs when they are encoded in the rRNA operon. Processes pre-crRNA and tracrRNA of type II CRISPR loci if present in the organism. In Corynebacterium diphtheriae (strain ATCC 700971 / NCTC 13129 / Biotype gravis), this protein is Ribonuclease 3.